A 388-amino-acid chain; its full sequence is 1-deoxy-D-xylulose 5-phosphate reductoisomerase (388 aa).

Positions 10, 11, 12, 13, 37, 38, and 122 each coordinate NADPH. Residue Lys-123 participates in 1-deoxy-D-xylulose 5-phosphate binding. Glu-124 is an NADPH binding site. Residue Asp-148 participates in Mn(2+) binding. Residues Ser-149, Glu-150, Ser-179, and His-202 each contribute to the 1-deoxy-D-xylulose 5-phosphate site. Glu-150 provides a ligand contact to Mn(2+). Gly-208 contributes to the NADPH binding site. Residues Ser-215, Asn-220, Lys-221, and Glu-224 each coordinate 1-deoxy-D-xylulose 5-phosphate. Glu-224 serves as a coordination point for Mn(2+).

It belongs to the DXR family. Mg(2+) is required as a cofactor. Requires Mn(2+) as cofactor.

The catalysed reaction is 2-C-methyl-D-erythritol 4-phosphate + NADP(+) = 1-deoxy-D-xylulose 5-phosphate + NADPH + H(+). The protein operates within isoprenoid biosynthesis; isopentenyl diphosphate biosynthesis via DXP pathway; isopentenyl diphosphate from 1-deoxy-D-xylulose 5-phosphate: step 1/6. Functionally, catalyzes the NADPH-dependent rearrangement and reduction of 1-deoxy-D-xylulose-5-phosphate (DXP) to 2-C-methyl-D-erythritol 4-phosphate (MEP). The protein is 1-deoxy-D-xylulose 5-phosphate reductoisomerase of Laribacter hongkongensis (strain HLHK9).